Here is a 408-residue protein sequence, read N- to C-terminus: tRNA pseudouridine synthase D (408 aa).

D76 (nucleophile) is an active-site residue. A TRUD domain is found at 149-362 (GFINYYDSQR…NSFERKVRIL (214 aa)).

It belongs to the pseudouridine synthase TruD family.

It catalyses the reaction uridine(13) in tRNA = pseudouridine(13) in tRNA. Responsible for synthesis of pseudouridine from uracil-13 in transfer RNAs. The chain is tRNA pseudouridine synthase D from Leptospira interrogans serogroup Icterohaemorrhagiae serovar Lai (strain 56601).